Here is a 496-residue protein sequence, read N- to C-terminus: Aldehyde dehydrogenase (496 aa).

Active-site residues include Glu263 and Cys296.

It belongs to the aldehyde dehydrogenase family.

It localises to the cytoplasm. The catalysed reaction is an aldehyde + NAD(+) + H2O = a carboxylate + NADH + 2 H(+). The protein is Aldehyde dehydrogenase (CLAH10) of Davidiella tassiana (Mycosphaerella tassiana).